Here is a 307-residue protein sequence, read N- to C-terminus: MNSSSPISIDLIAEILSRVPSKSVARFRCVSKPWASMIRRPYFTELFLTRSSPKPCILFATVADGVWSFFSLPQYPYEKSSSASVAASAKFHVKFPPNNMRIGHNSDRRYFSYGYTSGLIYLYGDSSDDRSVICNPYTGEYAILPYLQRYRKTYSFLVFEPIEKQFKILFMAYLSGDRDHKILTVGTGNMKWRTIRCSLRYEIVSEGVSINGVLYYLGETSAWDNKDYDLKYDYAIVCFDIRSEKFIFFEIERFCRLINYKGKLAVIYFEDDVNYQSCLYRKKNYVEPDAINKLNVWVLEDVEKQEW.

In terms of domain architecture, F-box spans 2–49 (NSSSPISIDLIAEILSRVPSKSVARFRCVSKPWASMIRRPYFTELFLT).

This Arabidopsis thaliana (Mouse-ear cress) protein is F-box protein At2g23160.